Consider the following 358-residue polypeptide: Phosphoserine aminotransferase (358 aa).

Residue arginine 41 participates in L-glutamate binding. Pyridoxal 5'-phosphate contacts are provided by residues 75 to 76 (AS), tryptophan 100, threonine 148, aspartate 167, and glutamine 190. Lysine 191 is subject to N6-(pyridoxal phosphate)lysine. 233–234 (NT) is a binding site for pyridoxal 5'-phosphate.

Belongs to the class-V pyridoxal-phosphate-dependent aminotransferase family. SerC subfamily. Homodimer. Pyridoxal 5'-phosphate serves as cofactor.

The protein resides in the cytoplasm. It catalyses the reaction O-phospho-L-serine + 2-oxoglutarate = 3-phosphooxypyruvate + L-glutamate. It carries out the reaction 4-(phosphooxy)-L-threonine + 2-oxoglutarate = (R)-3-hydroxy-2-oxo-4-phosphooxybutanoate + L-glutamate. It functions in the pathway amino-acid biosynthesis; L-serine biosynthesis; L-serine from 3-phospho-D-glycerate: step 2/3. The protein operates within cofactor biosynthesis; pyridoxine 5'-phosphate biosynthesis; pyridoxine 5'-phosphate from D-erythrose 4-phosphate: step 3/5. Catalyzes the reversible conversion of 3-phosphohydroxypyruvate to phosphoserine and of 3-hydroxy-2-oxo-4-phosphonooxybutanoate to phosphohydroxythreonine. The sequence is that of Phosphoserine aminotransferase from Campylobacter jejuni (strain RM1221).